The chain runs to 2718 residues: E3 SUMO-protein ligase RanBP2 (2718 aa).

A sufficient for interaction with Hsp83 region spans residues 1 to 100 (MFTTRKEVDA…DPRQSEVVID (100 aa)). A sufficient for interaction with piwi region spans residues 1-200 (MFTTRKEVDA…EKMKIDQAFN (200 aa)). TPR repeat units follow at residues 26–58 (DIKGLAVARLYMKVQEYPKAIEYLNGYLRVRDD) and 59–94 (AVGHNMIATCYSRLNPPDVTEALQHYQRSIQIDPRQ). Disordered regions lie at residues 796-816 (QQDRNSRGIDNSFGSPDVHNN) and 937-959 (EHQQQQQHQQQQSHNQGAIHPVV). Residues 803-816 (GIDNSFGSPDVHNN) show a composition bias toward polar residues. Residues 808-809 (FG) form repeat 1. The tract at residues 808–2581 (FGSPDVHNNS…GEENETKLFG (1774 aa)) is 27 X 2 AA repeats of F-G. The span at 938 to 948 (HQQQQQHQQQQ) shows a compositional bias: low complexity. 3 consecutive repeat copies span residues 1028-1029 (FG), 1035-1036 (FG), and 1104-1105 (FG). The disordered stretch occupies residues 1181–1208 (QPVEKEPPANVVITSSDPLPKPTTASVQ). Residues 1192-1208 (VITSSDPLPKPTTASVQ) are compositionally biased toward polar residues. Repeat 5 spans residues 1252–1253 (FG). Disordered regions lie at residues 1263–1314 (FKTQ…KPII) and 1483–1502 (NKPQEQTKTQPNPDPPATAA). A compositionally biased stretch (polar residues) spans 1284 to 1299 (NQSGATDPNKTLPQDT). One can recognise a RanBD1 1 domain in the interval 1309–1445 (DFKPIIPLPD…FTKASEAAKS (137 aa)). Residues 1483–1493 (NKPQEQTKTQP) show a composition bias toward polar residues. 4 repeat units span residues 1506-1507 (FG), 1539-1540 (FG), 1547-1548 (FG), and 1552-1553 (FG). The RanBD1 2 domain occupies 1605-1742 (QFVPVIALPD…VQKAQQSIGN (138 aa)). The interval 1738 to 1761 (QSIGNEPKKEEVPSAAGEKEKPIK) is disordered. The segment covering 1743–1760 (EPKKEEVPSAAGEKEKPI) has biased composition (basic and acidic residues). The stretch at 1763 to 1764 (FG) is repeat 10. The segment at 1770–1799 (KAGSWNCQACYTNNGQDQLYCLACQEPKDA) adopts a RanBP2-type 1 zinc-finger fold. Repeat copies occupy residues 1826 to 1827 (FG), 1842 to 1843 (FG), 1874 to 1875 (FG), and 1883 to 1884 (FG). The RanBP2-type 2 zinc finger occupies 1890–1919 (AVGSWSCSACYVNNPGESLYCSACDAPKND). 2 repeat units span residues 1942–1943 (FG) and 1944–1945 (FG). 3 disordered regions span residues 1981 to 2021 (FTFS…TYFS), 2154 to 2204 (EDSP…THEV), and 2239 to 2273 (SLSRNNSSASEASKTPSSAFIFGSTDKSEPGKDAG). Positions 2002–2016 (EDEDNDSQEVEEEEN) are enriched in acidic residues. Residues 2019-2151 (YFSPVIPLPD…IKNALNETAK (133 aa)) form the RanBD1 3 domain. A compositionally biased stretch (polar residues) spans 2161–2175 (SVSQSTEANKPSQKN). Over residues 2239–2257 (SLSRNNSSASEASKTPSSA) the composition is skewed to low complexity. Repeat copies occupy residues 2260–2261 (FG), 2313–2314 (FG), 2332–2333 (FG), 2352–2353 (FG), 2360–2361 (FG), 2366–2367 (FG), 2393–2394 (FG), 2399–2400 (FG), 2415–2416 (FG), 2421–2422 (FG), and 2580–2581 (FG). Positions 2320–2346 (AEQQKKDSSESVFGGNKADSQSPATQE) are disordered. One can recognise a RanBD1 4 domain in the interval 2556–2699 (HYDAIVELPD…VNSCIKRAKA (144 aa)).

The protein belongs to the RanBP2 E3 ligase family. In terms of assembly, part of the nuclear pore complex. Forms a complex with Nxt1, sbr/Nxf1 and RanGAP. Interacts (via TPR repeats) with Hsp83; the interaction is required for the nuclear import of the sesquiterpenoid juvenile hormone receptor Met. Interacts (via N-terminus) with piwi. Expressed in both oocytes and nurse cells (at protein level).

Its subcellular location is the nucleus. It is found in the nuclear pore complex. In terms of biological role, E3 SUMO-protein ligase. Component of the nuclear pore complex (NPC), a complex required for trafficking across the nuclear envelope. Required for nuclear import of nuclear localization signal (NLS)-containing proteins in an importin alpha/importin beta-dependent manner, but also for the nuclear import of specific proteins such as phosphorylated Mad or the sesquiterpenoid juvenile hormone receptor Met as part of the juvenile hormone signal transduction pathway. Plays a role in nuclear mRNA export by recruiting the mRNA transport complex composed of Nxt1 and sbr/Nxf1 to the NPC. Essential during germline development for transposon silencing and piRNA biogenesis probably by regulating piwi localization to the nucleus. During oogenesis, required to form granules that modulate the biogenesis of annulate lamellae containing nuclear pore complex components. This chain is E3 SUMO-protein ligase RanBP2, found in Drosophila melanogaster (Fruit fly).